Reading from the N-terminus, the 279-residue chain is Putative pyruvate, phosphate dikinase regulatory protein (279 aa).

Residue 153–160 (GISRTSKT) participates in ADP binding.

This sequence belongs to the pyruvate, phosphate/water dikinase regulatory protein family. PDRP subfamily.

The catalysed reaction is N(tele)-phospho-L-histidyl/L-threonyl-[pyruvate, phosphate dikinase] + ADP = N(tele)-phospho-L-histidyl/O-phospho-L-threonyl-[pyruvate, phosphate dikinase] + AMP + H(+). The enzyme catalyses N(tele)-phospho-L-histidyl/O-phospho-L-threonyl-[pyruvate, phosphate dikinase] + phosphate + H(+) = N(tele)-phospho-L-histidyl/L-threonyl-[pyruvate, phosphate dikinase] + diphosphate. In terms of biological role, bifunctional serine/threonine kinase and phosphorylase involved in the regulation of the pyruvate, phosphate dikinase (PPDK) by catalyzing its phosphorylation/dephosphorylation. The protein is Putative pyruvate, phosphate dikinase regulatory protein of Bartonella bacilliformis (strain ATCC 35685 / KC583 / Herrer 020/F12,63).